Consider the following 316-residue polypeptide: HPr kinase/phosphorylase (316 aa).

Catalysis depends on residues H143 and K164. Residue 158–165 (GEAGSGKS) participates in ATP binding. S165 provides a ligand contact to Mg(2+). Residue D182 is the Proton acceptor; for phosphorylation activity. Proton donor; for dephosphorylation activity of the active site. The important for the catalytic mechanism of both phosphorylation and dephosphorylation stretch occupies residues 206-215 (LEVRGLGVLN). E207 serves as a coordination point for Mg(2+). R251 is a catalytic residue. Residues 272 to 277 (PVMPGR) form an important for the catalytic mechanism of dephosphorylation region.

This sequence belongs to the HPrK/P family. As to quaternary structure, homohexamer. Mg(2+) is required as a cofactor.

The catalysed reaction is [HPr protein]-L-serine + ATP = [HPr protein]-O-phospho-L-serine + ADP + H(+). The enzyme catalyses [HPr protein]-O-phospho-L-serine + phosphate + H(+) = [HPr protein]-L-serine + diphosphate. Catalyzes the ATP- as well as the pyrophosphate-dependent phosphorylation of a specific serine residue in HPr, a phosphocarrier protein of the phosphoenolpyruvate-dependent sugar phosphotransferase system (PTS). HprK/P also catalyzes the pyrophosphate-producing, inorganic phosphate-dependent dephosphorylation (phosphorolysis) of seryl-phosphorylated HPr (P-Ser-HPr). The polypeptide is HPr kinase/phosphorylase (Xanthomonas axonopodis pv. citri (strain 306)).